A 412-amino-acid chain; its full sequence is BSD domain-containing protein 1 (412 aa).

A BSD domain is found at 146-198 (WLAYWDPEHRKAEISELLVTSPSIRALYTKMVPAAVSHSEFWQRYFYKVHQLE). Basic and acidic residues-rich tracts occupy residues 208–219 (KQRADQSVHSEE) and 255–271 (HVEDKSEKMAELNRDHT). Disordered regions lie at residues 208 to 228 (KQRADQSVHSEEPQWEEEEED) and 255 to 383 (HVED…EKDF). Residues 272–287 (SITSPSESSESISPIT) show a composition bias toward low complexity. A compositionally biased stretch (basic and acidic residues) spans 340–351 (THREDPPSDLRV). The span at 355–374 (NSDSGKSTPSNNGQKGSSTD) shows a compositional bias: polar residues.

In Xenopus tropicalis (Western clawed frog), this protein is BSD domain-containing protein 1 (bsdc1).